We begin with the raw amino-acid sequence, 179 residues long: Replication restart protein DnaT (179 aa).

The tract at residues 156 to 179 is disordered; that stretch reads GGLPKRDVNTVSEPDSQIPPGFRG.

It belongs to the DnaT family. Homooligomerizes. Interacts with PriB. Component of the replication restart primosome. Primosome assembly occurs via a 'hand-off' mechanism. PriA binds to replication forks, subsequently PriB then DnaT bind; DnaT then displaces ssDNA to generate the helicase loading substrate.

Functionally, involved in the restart of stalled replication forks, which reloads the replicative helicase on sites other than the origin of replication. Can function in multiple replication restart pathways. Displaces ssDNA from a PriB-ssDNA complex. Probably forms a spiral filament on ssDNA. The protein is Replication restart protein DnaT of Escherichia coli O1:K1 / APEC.